Reading from the N-terminus, the 379-residue chain is Homoserine O-succinyltransferase (379 aa).

One can recognise an AB hydrolase-1 domain in the interval 51–360 (NAVLICHALS…DAPQGHDAFL (310 aa)). The Nucleophile role is filled by Ser157. Residue Arg227 participates in substrate binding. Residues Asp323 and His356 contribute to the active site. Asp357 is a substrate binding site.

The protein belongs to the AB hydrolase superfamily. MetX family. As to quaternary structure, homodimer.

The protein resides in the cytoplasm. The catalysed reaction is L-homoserine + succinyl-CoA = O-succinyl-L-homoserine + CoA. Its pathway is amino-acid biosynthesis; L-methionine biosynthesis via de novo pathway; O-succinyl-L-homoserine from L-homoserine: step 1/1. Functionally, transfers a succinyl group from succinyl-CoA to L-homoserine, forming succinyl-L-homoserine. The chain is Homoserine O-succinyltransferase from Stutzerimonas stutzeri (strain A1501) (Pseudomonas stutzeri).